Here is a 312-residue protein sequence, read N- to C-terminus: Methionyl-tRNA formyltransferase (312 aa).

109-112 (SILP) contacts (6S)-5,6,7,8-tetrahydrofolate.

The protein belongs to the Fmt family.

It catalyses the reaction L-methionyl-tRNA(fMet) + (6R)-10-formyltetrahydrofolate = N-formyl-L-methionyl-tRNA(fMet) + (6S)-5,6,7,8-tetrahydrofolate + H(+). Attaches a formyl group to the free amino group of methionyl-tRNA(fMet). The formyl group appears to play a dual role in the initiator identity of N-formylmethionyl-tRNA by promoting its recognition by IF2 and preventing the misappropriation of this tRNA by the elongation apparatus. This is Methionyl-tRNA formyltransferase from Dictyoglomus thermophilum (strain ATCC 35947 / DSM 3960 / H-6-12).